A 274-amino-acid chain; its full sequence is Large ribosomal subunit protein uL2 (274 aa).

Positions 224-274 (AMNPVDHPHGGGEGRTGEGQVPVSPWNTMTKGYRTRSNKRTQTFIVSRRKK) are disordered. A compositionally biased stretch (basic and acidic residues) spans 229–239 (DHPHGGGEGRT).

The protein belongs to the universal ribosomal protein uL2 family. As to quaternary structure, part of the 50S ribosomal subunit. Forms a bridge to the 30S subunit in the 70S ribosome.

In terms of biological role, one of the primary rRNA binding proteins. Required for association of the 30S and 50S subunits to form the 70S ribosome, for tRNA binding and peptide bond formation. It has been suggested to have peptidyltransferase activity; this is somewhat controversial. Makes several contacts with the 16S rRNA in the 70S ribosome. The sequence is that of Large ribosomal subunit protein uL2 from Methylibium petroleiphilum (strain ATCC BAA-1232 / LMG 22953 / PM1).